The sequence spans 251 residues: MNLNSIPAFDDNYIWVLNDEAGRCLIVDPGDAEPVLNAIAANNWQPEAIFLTHHHHDHVGGVKELVEKFPQIVVYGPQETQDKGTTQVVKDGETAFVLGHEFSVIATPGHTLGHICYFSKPYLFCGDTLFSGGCGRLFEGTASQMYQSLKKLSVLPDDTLVCCAHEYTLSNMKFALSILPHDLSINDYYRKVKELRAKNQITLPVILKNERQINVFLRTEDIDLINVINEETLLQQPEERFAWLRSKKDRF.

Residues His53, His55, Asp57, His58, His110, Asp127, and His165 each contribute to the Zn(2+) site.

It belongs to the metallo-beta-lactamase superfamily. Glyoxalase II family. In terms of assembly, monomer. The cofactor is Zn(2+).

The catalysed reaction is an S-(2-hydroxyacyl)glutathione + H2O = a 2-hydroxy carboxylate + glutathione + H(+). It functions in the pathway secondary metabolite metabolism; methylglyoxal degradation; (R)-lactate from methylglyoxal: step 2/2. Functionally, thiolesterase that catalyzes the hydrolysis of S-D-lactoyl-glutathione to form glutathione and D-lactic acid. This Escherichia coli (strain ATCC 8739 / DSM 1576 / NBRC 3972 / NCIMB 8545 / WDCM 00012 / Crooks) protein is Hydroxyacylglutathione hydrolase.